A 268-amino-acid polypeptide reads, in one-letter code: Tryptophan synthase alpha chain (268 aa).

Catalysis depends on proton acceptor residues Glu-49 and Asp-60.

It belongs to the TrpA family. Tetramer of two alpha and two beta chains.

It catalyses the reaction (1S,2R)-1-C-(indol-3-yl)glycerol 3-phosphate + L-serine = D-glyceraldehyde 3-phosphate + L-tryptophan + H2O. Its pathway is amino-acid biosynthesis; L-tryptophan biosynthesis; L-tryptophan from chorismate: step 5/5. In terms of biological role, the alpha subunit is responsible for the aldol cleavage of indoleglycerol phosphate to indole and glyceraldehyde 3-phosphate. The sequence is that of Tryptophan synthase alpha chain from Shigella boydii serotype 4 (strain Sb227).